A 473-amino-acid polypeptide reads, in one-letter code: Reticulon-4 receptor (473 aa).

Positions Met1–Pro26 are cleaved as a signal peptide. 2 disulfides stabilise this stretch: Cys27/Cys33 and Cys31/Cys43. An LRRNT domain is found at Cys27–Ala57. LRR repeat units follow at residues Ser58–Ser79, Asn82–Gly103, Leu106–Gly128, His131–Gly152, Ala155–Asp176, Asn179–Gly200, Ser203–Asp224, and Arg227–Pro248. Asn82 carries N-linked (GlcNAc...) asparagine glycosylation. Asn179 is a glycosylation site (N-linked (GlcNAc...) asparagine). In terms of domain architecture, LRRCT spans Asn260 to Val311. 3 disulfide bridges follow: Cys264-Cys287, Cys266-Cys335, and Cys309-Cys336. The interval Val346–Gly446 is disordered. N-linked (GlcNAc...) asparagine glycosylation occurs at Asn372. Residues Pro413–Cys429 show a composition bias toward basic residues. The segment covering Ala434–Glu445 has biased composition (gly residues). Ser447 is lipidated: GPI-anchor amidated serine. The propeptide at Gly448–Cys473 is removed in mature form.

The protein belongs to the Nogo receptor family. Homodimer. Interacts with MAG. Interacts with RTN4. Interacts with NGFR. Interacts with LINGO1. Interacts with KIAA0319L. Interacts with OLFM1; this inhibits interaction with LINGO1 and NGFR. Interacts with OMG. N-glycosylated. O-glycosylated. Contains terminal sialic acid groups on its glycan chains. As to expression, detected in embryonic hippocampus neurons. Detected in brain (at protein level). Detected in neurons in the neocortex, in hippocampus, dorsal thalamus, cerebellum granule cell layer and the mitral cell layer in the olfactory bulb. Detected in brain, dorsal root ganglion and heart.

It localises to the cell membrane. Its subcellular location is the membrane raft. It is found in the cell projection. The protein resides in the dendrite. The protein localises to the axon. It localises to the perikaryon. In terms of biological role, receptor for RTN4, OMG and MAG. Functions as a receptor for the sialylated gangliosides GT1b and GM1. Besides, functions as a receptor for chondroitin sulfate proteoglycans. Can also bind heparin. Intracellular signaling cascades are triggered via the coreceptor NGFR. Signaling mediates activation of Rho and downstream reorganization of the actin cytoskeleton. Mediates axonal growth inhibition. Mediates axonal growth inhibition and plays a role in regulating axon regeneration and neuronal plasticity in the adult central nervous system. Plays a role in postnatal brain development. Required for normal axon migration across the brain midline and normal formation of the corpus callosum. Protects motoneurons against apoptosis; protection against apoptosis is probably mediated via interaction with MAG. Acts in conjunction with RTN4 and LINGO1 in regulating neuronal precursor cell motility during cortical development. Like other family members, plays a role in restricting the number dendritic spines and the number of synapses that are formed during brain development. In Mus musculus (Mouse), this protein is Reticulon-4 receptor (Rtn4r).